The primary structure comprises 907 residues: Putative pentatricopeptide repeat-containing protein At5g59900 (907 aa).

22 PPR repeats span residues 103 to 137 (STASFCILIHALVKANLFWPASSLLQTLLLRALKP), 155 to 185 (SSSSFDLLIQHYVRSRRVLDGVLVFKMMITK), 191 to 225 (EVRTLSALLHGLVKFRHFGLAMELFNDMVSVGIRP), 226 to 260 (DVYIYTGVIRSLCELKDLSRAKEMIAHMEATGCDV), 261 to 295 (NIVPYNVLIDGLCKKQKVWEAVGIKKDLAGKDLKP), 296 to 330 (DVVTYCTLVYGLCKVQEFEIGLEMMDEMLCLRFSP), 331 to 365 (SEAAVSSLVEGLRKRGKIEEALNLVKRVVDFGVSP), 366 to 400 (NLFVYNALIDSLCKGRKFHEAELLFDRMGKIGLRP), 401 to 435 (NDVTYSILIDMFCRRGKLDTALSFLGEMVDTGLKL), 436 to 470 (SVYPYNSLINGHCKFGDISAAEGFMAEMINKKLEP), 471 to 505 (TVVTYTSLMGGYCSKGKINKALRLYHEMTGKGIAP), 506 to 540 (SIYTFTTLLSGLFRAGLIRDAVKLFNEMAEWNVKP), 541 to 575 (NRVTYNVMIEGYCEEGDMSKAFEFLKEMTEKGIVP), 576 to 610 (DTYSYRPLIHGLCLTGQASEAKVFVDGLHKGNCEL), 611 to 645 (NEICYTGLLHGFCREGKLEEALSVCQEMVQRGVDL), 646 to 680 (DLVCYGVLIDGSLKHKDRKLFFGLLKEMHDRGLKP), 681 to 715 (DDVIYTSMIDAKSKTGDFKEAFGIWDLMINEGCVP), 716 to 750 (NEVTYTAVINGLCKAGFVNEAEVLCSKMQPVSSVP), 751 to 782 (NQVTYGCFLDILTKGEVDMQKAVELHNAILKG), 786 to 820 (NTATYNMLIRGFCRQGRIEEASELITRMIGDGVSP), 821 to 855 (DCITYTTMINELCRRNDVKKAIELWNSMTEKGIRP), and 856 to 890 (DRVAYNTLIHGCCVAGEMGKATELRNEMLRQGLIP). The segment at 887-907 (GLIPNNKTSRTTTSNDTSSKS) is disordered. Over residues 891–907 (NNKTSRTTTSNDTSSKS) the composition is skewed to low complexity.

Belongs to the PPR family. P subfamily.

The sequence is that of Putative pentatricopeptide repeat-containing protein At5g59900 from Arabidopsis thaliana (Mouse-ear cress).